A 214-amino-acid chain; its full sequence is Insulin-like growth factor 2 (214 aa).

A b region spans residues 48 to 79 (EVASAETLCGGELVDALQFVCEDRGFYFSRPT). Cystine bridges form between Cys56-Cys97, Cys68-Cys110, and Cys96-Cys101. The interval 80–90 (SRSNSRRSQNR) is c. The tract at residues 91 to 111 (GIVEECCFRSCDLNLLEQYCA) is a. The d stretch occupies residues 112-117 (KPAKSE). Positions 118-214 (RDVSATSLQI…PPTDNYVSHN (97 aa)) are cleaved as a propeptide — e peptide.

This sequence belongs to the insulin family.

It is found in the secreted. Its function is as follows. The insulin-like growth factors, isolated from plasma, are structurally and functionally related to insulin but have a much higher growth-promoting activity. Acts as a ligand for integrin which is required for IGF2 signaling. This chain is Insulin-like growth factor 2, found in Oncorhynchus mykiss (Rainbow trout).